The following is a 734-amino-acid chain: ABC transporter D family member 1 (734 aa).

4 helical membrane passes run 52 to 72 (IIKI…ILFG), 112 to 132 (FAIG…SIMA), 177 to 197 (FTTL…VVVY), and 204 to 224 (TTID…GYLI). The 289-residue stretch at 63-351 (PLTLFLILFG…VEEEQAKIQF (289 aa)) folds into the ABC transmembrane type-1 domain. A compositionally biased stretch (basic and acidic residues) spans 271–286 (HPEKRFDNNDYDHGYE). The disordered stretch occupies residues 271–296 (HPEKRFDNNDYDHGYESDDSDQSCDE). Residues 332 to 359 (DSNDQKEELLVEEEQAKIQFEALLKNKK) are a coiled coil. The helical transmembrane segment at 374-394 (LFTYLSPIANYFIIAIPVFFL) threads the bilayer. The region spanning 492-729 (ITLDDVTYFT…NNNNTNKIAE (238 aa)) is the ABC transporter domain. 525-532 (GPSGSGKS) contributes to the ATP binding site. Residues 712 to 725 (QSNNINNNNNNNTN) are compositionally biased toward low complexity. Residues 712-734 (QSNNINNNNNNNTNKIAEDSVFD) are disordered.

This sequence belongs to the ABC transporter superfamily. ABCD family. Peroxisomal fatty acyl CoA transporter (TC 3.A.1.203) subfamily.

Its subcellular location is the membrane. It carries out the reaction (9Z)-octadecenoyl-CoA(in) = (9Z)-octadecenoyl-CoA(out). The sequence is that of ABC transporter D family member 1 (abcD1) from Dictyostelium discoideum (Social amoeba).